The sequence spans 145 residues: D-aminoacyl-tRNA deacylase (145 aa).

Positions 137–138 (GP) match the Gly-cisPro motif, important for rejection of L-amino acids motif.

The protein belongs to the DTD family. In terms of assembly, homodimer.

It localises to the cytoplasm. It carries out the reaction glycyl-tRNA(Ala) + H2O = tRNA(Ala) + glycine + H(+). The enzyme catalyses a D-aminoacyl-tRNA + H2O = a tRNA + a D-alpha-amino acid + H(+). In terms of biological role, an aminoacyl-tRNA editing enzyme that deacylates mischarged D-aminoacyl-tRNAs. Also deacylates mischarged glycyl-tRNA(Ala), protecting cells against glycine mischarging by AlaRS. Acts via tRNA-based rather than protein-based catalysis; rejects L-amino acids rather than detecting D-amino acids in the active site. By recycling D-aminoacyl-tRNA to D-amino acids and free tRNA molecules, this enzyme counteracts the toxicity associated with the formation of D-aminoacyl-tRNA entities in vivo and helps enforce protein L-homochirality. The chain is D-aminoacyl-tRNA deacylase from Escherichia coli O81 (strain ED1a).